Consider the following 164-residue polypeptide: Protein-export protein SecB (164 aa).

Belongs to the SecB family. Homotetramer, a dimer of dimers. One homotetramer interacts with 1 SecA dimer.

The protein resides in the cytoplasm. Functionally, one of the proteins required for the normal export of preproteins out of the cell cytoplasm. It is a molecular chaperone that binds to a subset of precursor proteins, maintaining them in a translocation-competent state. It also specifically binds to its receptor SecA. The protein is Protein-export protein SecB of Nitrosococcus oceani (strain ATCC 19707 / BCRC 17464 / JCM 30415 / NCIMB 11848 / C-107).